We begin with the raw amino-acid sequence, 157 residues long: NAD(P)H-quinone oxidoreductase subunit N (157 aa).

This sequence belongs to the complex I NdhN subunit family. In terms of assembly, NDH-1 can be composed of about 15 different subunits; different subcomplexes with different compositions have been identified which probably have different functions.

It is found in the cellular thylakoid membrane. The enzyme catalyses a plastoquinone + NADH + (n+1) H(+)(in) = a plastoquinol + NAD(+) + n H(+)(out). It catalyses the reaction a plastoquinone + NADPH + (n+1) H(+)(in) = a plastoquinol + NADP(+) + n H(+)(out). NDH-1 shuttles electrons from an unknown electron donor, via FMN and iron-sulfur (Fe-S) centers, to quinones in the respiratory and/or the photosynthetic chain. The immediate electron acceptor for the enzyme in this species is believed to be plastoquinone. Couples the redox reaction to proton translocation, and thus conserves the redox energy in a proton gradient. Cyanobacterial NDH-1 also plays a role in inorganic carbon-concentration. This is NAD(P)H-quinone oxidoreductase subunit N from Synechococcus sp. (strain CC9902).